The chain runs to 212 residues: Ribonuclease HII (212 aa).

In terms of domain architecture, RNase H type-2 spans 1–206 (MARFGVDEAG…SRDALGAAEQ (206 aa)). The a divalent metal cation site is built by Asp-7, Glu-8, and Asp-100.

This sequence belongs to the RNase HII family. The cofactor is Mn(2+). Mg(2+) serves as cofactor.

The protein resides in the cytoplasm. The catalysed reaction is Endonucleolytic cleavage to 5'-phosphomonoester.. Endonuclease that specifically degrades the RNA of RNA-DNA hybrids. This Halobacterium salinarum (strain ATCC 29341 / DSM 671 / R1) protein is Ribonuclease HII.